Consider the following 246-residue polypeptide: tRNA (guanine-N(1)-)-methyltransferase (246 aa).

S-adenosyl-L-methionine contacts are provided by residues G117 and I137–L142.

The protein belongs to the RNA methyltransferase TrmD family. As to quaternary structure, homodimer.

Its subcellular location is the cytoplasm. It carries out the reaction guanosine(37) in tRNA + S-adenosyl-L-methionine = N(1)-methylguanosine(37) in tRNA + S-adenosyl-L-homocysteine + H(+). In terms of biological role, specifically methylates guanosine-37 in various tRNAs. This chain is tRNA (guanine-N(1)-)-methyltransferase, found in Acinetobacter baumannii (strain SDF).